The following is a 358-amino-acid chain: Anhydro-N-acetylmuramic acid kinase (358 aa).

ATP is bound at residue 9 to 16 (GTSLDGVD).

This sequence belongs to the anhydro-N-acetylmuramic acid kinase family.

The catalysed reaction is 1,6-anhydro-N-acetyl-beta-muramate + ATP + H2O = N-acetyl-D-muramate 6-phosphate + ADP + H(+). The protein operates within amino-sugar metabolism; 1,6-anhydro-N-acetylmuramate degradation. It participates in cell wall biogenesis; peptidoglycan recycling. Its function is as follows. Catalyzes the specific phosphorylation of 1,6-anhydro-N-acetylmuramic acid (anhMurNAc) with the simultaneous cleavage of the 1,6-anhydro ring, generating MurNAc-6-P. Is required for the utilization of anhMurNAc either imported from the medium or derived from its own cell wall murein, and thus plays a role in cell wall recycling. The chain is Anhydro-N-acetylmuramic acid kinase from Acidiphilium cryptum (strain JF-5).